The sequence spans 141 residues: VLSPADKNNVKACWEKIGGHGAAYGAEALERMFLSFPTTKTYFPHFDLSHGSAQVQGHGKKVADALANAAAHVDDLPSALSALSDLHAHKLRVDPVNFKLLSHCLLVTLAAHHPAEFTPAVHASLDKFLASVSTVLTSKYR.

In terms of domain architecture, Globin spans 1-141 (VLSPADKNNV…VSTVLTSKYR (141 aa)). At serine 3 the chain carries Phosphoserine. N6-succinyllysine is present on residues lysine 7 and lysine 11. Residue lysine 16 is modified to N6-acetyllysine; alternate. Position 16 is an N6-succinyllysine; alternate (lysine 16). The residue at position 24 (tyrosine 24) is a Phosphotyrosine. Phosphoserine is present on serine 35. N6-succinyllysine is present on lysine 40. Serine 49 bears the Phosphoserine mark. Histidine 58 contacts O2. Histidine 87 contacts heme b. Phosphoserine is present on serine 102. Threonine 108 bears the Phosphothreonine mark. Serine 124 and serine 131 each carry phosphoserine. Threonine 134 and threonine 137 each carry phosphothreonine. Serine 138 bears the Phosphoserine mark.

Belongs to the globin family. In terms of assembly, heterotetramer of two alpha chains and two beta chains. As to expression, red blood cells.

In terms of biological role, involved in oxygen transport from the lung to the various peripheral tissues. Functionally, hemopressin acts as an antagonist peptide of the cannabinoid receptor CNR1. Hemopressin-binding efficiently blocks cannabinoid receptor CNR1 and subsequent signaling. In Urocitellus townsendii (Townsend's ground squirrel), this protein is Hemoglobin subunit alpha (HBA).